The following is a 631-amino-acid chain: tRNA uridine 5-carboxymethylaminomethyl modification enzyme MnmG (631 aa).

15–20 is a binding site for FAD; sequence GAGHAG. The interval 214 to 233 is disordered; sequence YSKTEEEPGDKEPRHFSFTS. 276 to 290 serves as a coordination point for NAD(+); the sequence is GPRYCPSIETKVVRF.

It belongs to the MnmG family. Homodimer. Heterotetramer of two MnmE and two MnmG subunits. FAD is required as a cofactor.

It is found in the cytoplasm. Its function is as follows. NAD-binding protein involved in the addition of a carboxymethylaminomethyl (cmnm) group at the wobble position (U34) of certain tRNAs, forming tRNA-cmnm(5)s(2)U34. This is tRNA uridine 5-carboxymethylaminomethyl modification enzyme MnmG from Lactobacillus delbrueckii subsp. bulgaricus (strain ATCC BAA-365 / Lb-18).